Consider the following 322-residue polypeptide: MISLLAVAVLAGCSNPETRSQANRGFDYEQETLRTAPLLIPEGLQAPRFNTEYVIPKGTAQGVTGKVLDIRPPTQVLPLVRGSEAMTEGSGLWFYQQRLDQPLERELNQALTVFFEQTDTDYDAVANGFESSGDAIGAPSQQFRWQLMPDAVRRAVAVQVQSTEGGGVLAQDRLRAEASMLNAFSLSYQRELSRQQELLDQGPIALTLDAGQGLLLAEQDYDRTWKRLITLLPRLGFDISNRQQALGYVDVEFDGLSKGDWQDLRLPALDIPEQEYRIQLGDLGSRTSLSLSNKDREPVAADVLSKLVNTLAPAFERTDLVR.

Positions 1–22 are cleaved as a signal peptide; sequence MISLLAVAVLAGCSNPETRSQA.

The protein belongs to the BamC family. In terms of assembly, part of the Bam complex.

The protein resides in the cell outer membrane. In terms of biological role, part of the outer membrane protein assembly complex, which is involved in assembly and insertion of beta-barrel proteins into the outer membrane. This Oceanimonas sp. (strain GK1 / IBRC-M 10197) protein is Outer membrane protein assembly factor BamC.